The chain runs to 415 residues: Serine hydroxymethyltransferase (415 aa).

(6S)-5,6,7,8-tetrahydrofolate is bound by residues Leu-117 and 121-123 (GHL). Lys-226 is subject to N6-(pyridoxal phosphate)lysine. Residues Glu-241 and 349–351 (SPF) contribute to the (6S)-5,6,7,8-tetrahydrofolate site.

This sequence belongs to the SHMT family. In terms of assembly, homodimer. Pyridoxal 5'-phosphate is required as a cofactor.

The protein localises to the cytoplasm. The enzyme catalyses (6R)-5,10-methylene-5,6,7,8-tetrahydrofolate + glycine + H2O = (6S)-5,6,7,8-tetrahydrofolate + L-serine. Its pathway is one-carbon metabolism; tetrahydrofolate interconversion. It functions in the pathway amino-acid biosynthesis; glycine biosynthesis; glycine from L-serine: step 1/1. Its function is as follows. Catalyzes the reversible interconversion of serine and glycine with tetrahydrofolate (THF) serving as the one-carbon carrier. This reaction serves as the major source of one-carbon groups required for the biosynthesis of purines, thymidylate, methionine, and other important biomolecules. Also exhibits THF-independent aldolase activity toward beta-hydroxyamino acids, producing glycine and aldehydes, via a retro-aldol mechanism. The sequence is that of Serine hydroxymethyltransferase from Geotalea daltonii (strain DSM 22248 / JCM 15807 / FRC-32) (Geobacter daltonii).